Consider the following 358-residue polypeptide: Protein ocs (358 aa).

It belongs to the lysopine/nopaline/octopine/opine/vitopine dehydrogenases family. Monomer.

The enzyme catalyses D-octopine + NAD(+) + H2O = L-arginine + pyruvate + NADH + H(+). The catalysed reaction is D-lysopine + NADP(+) + H2O = L-lysine + pyruvate + NADPH + H(+). Its function is as follows. Reductive condensation of pyruvate and arginine, lysine, histidine, or octopine to form octopine, lysopine, histopine, or octopinic acid, respectively. NADPH is the preferred cofactor, but NADH can also be used. This is Protein ocs (ocs) from Agrobacterium tumefaciens (strain Ach5).